We begin with the raw amino-acid sequence, 454 residues long: UDP-N-acetylmuramoylalanine--D-glutamate ligase (454 aa).

114–120 (GTNGKTT) contacts ATP.

Belongs to the MurCDEF family.

It localises to the cytoplasm. It catalyses the reaction UDP-N-acetyl-alpha-D-muramoyl-L-alanine + D-glutamate + ATP = UDP-N-acetyl-alpha-D-muramoyl-L-alanyl-D-glutamate + ADP + phosphate + H(+). It functions in the pathway cell wall biogenesis; peptidoglycan biosynthesis. Cell wall formation. Catalyzes the addition of glutamate to the nucleotide precursor UDP-N-acetylmuramoyl-L-alanine (UMA). The sequence is that of UDP-N-acetylmuramoylalanine--D-glutamate ligase from Desulfitobacterium hafniense (strain DSM 10664 / DCB-2).